The chain runs to 1285 residues: MRSSTAAVQRPAAGDPEPRRPAGWAARRSLPRTARRGGRGGAVAYPSAGPPPRGPGAPPRGPRSPPCASDCFGSNGHGASRPGSRRLLGVCGPPRPFVVVLLALAPAATPARACPPGVRASPPRSGVSSSARPAPGCPRPACEPVYGPLTMSLKPQPQPPAPATGRKPGGGLLSSPGAAPASAAVTSASVVPAPAAPVASSSAAAGGGRPGLGRGRNSSKGLPQPTISFDGIYANVRMVHILTSVVGSKCEVQVKNGGIYEGVFKTYSPKCDLVLDAAHEKSTESSSGPKREEIMESVLFKCSDFVVVQFKDTDSSYARRDAFTDSALSAKVNGEHKEKDLEPWDAGELTASEELELENDVSNGWDPNDMFRYNEENYGVVSTYDSSLSSYTVPLERDNSEEFLKREARANQLAEEIESSAQYKARVALENDDRSEEEKYTAVQRNCSDREGHGPNTRDNKYIPPGQRNREVLSWGSGRQSSPRMGQPGPGSMPSRAASHTSDFNPNAGSDQRVVNGGVPWPSPCPSHSSRPPSRYQSGPNSLPPRAATHTRPPSRPPSRPSRPPSHPSAHGSPAPVSTMPKRMSSEGPPRMSPKAQRHPRNHRVSAGRGSMSSGLEFVSHNPPSEAAAPPVARTSPAGGTWSSVVSGVPRLSPKTHRPRSPRQSSIGNSPSGPVLASPQAGIIPAEAVSMPVPAASPTPASPASNRALTPSIEAKDSRLQDQRQNSPAGSKENVKASETSPSFSKADNKGMSPVVSEHRKQIDDLKKFKNDFRLQPSSTSESMDQLLSKNREGEKSRDLIKDKTEASAKDSFIDSSSSSSNCTSGSSKTNSPSISPSMLSNAEHKRGPEVTSQGVQTSSPACKQEKDDREEKKDTTEQVRKSTLNPNAKEFNPRSFSQPKPSTTPTSPRPQAQPSPSMVGHQQPAPVYTQPVCFAPNMMYPVPVSPGVQPLYPIPMTPMPVNQAKTYRAGKVPNMPQQRQDQHHQSTMMHPASAAGPPIVATPPAYSTQYVAYSPQQFPNQPLVQHVPHYQSQHPHVYSPVIQGNARMMAPPAHAQPGLVSSSAAQFGAHEQTHAMYACPKLPYNKETSPSFYFAISTGSLAQQYAHPNAALHPHTPHPQPSATPTGQQQSQHGGSHPAPSPVQHHQHQAAQALHLASPQQQSAIYHAGLAPTPPSMTPASNTQSPQSSFPAAQQTVFTIHPSHVQPAYTTPPHMAHVPQAHVQSGMVPSHPTAHAPMMLMTTQPPGPKAALAQSALQPIPVSTTAHFPYMTHPSVQAHHQQQL.

3 disordered regions span residues 1–85 (MRSS…PGSR), 111–178 (ARAC…SPGA), and 197–224 (PVASSSAAAGGGRPGLGRGRNSSKGLPQ). The span at 29–38 (SLPRTARRGG) shows a compositional bias: basic residues. Pro residues predominate over residues 48–65 (AGPPPRGPGAPPRGPRSP). The span at 128 to 144 (SSSARPAPGCPRPACEP) shows a compositional bias: low complexity. Over residues 205–214 (AGGGRPGLGR) the composition is skewed to gly residues. A phosphoserine mark is found at Ser-218 and Ser-219. The Sm domain occupies 237–314 (RMVHILTSVV…FVVVQFKDTD (78 aa)). Phosphoserine is present on residues Ser-362 and Ser-435. 2 stretches are compositionally biased toward basic and acidic residues: residues 428–440 (ALENDDRSEEEKY) and 447–461 (CSDREGHGPNTRDNK). 2 disordered regions span residues 428–925 (ALEN…HQQP) and 1111–1191 (AALH…QSSF). At Ser-477 the chain carries Phosphoserine. Over residues 498-510 (ASHTSDFNPNAGS) the composition is skewed to polar residues. At Ser-523 the chain carries Phosphoserine. Residues 526–552 (PSHSSRPPSRYQSGPNSLPPRAATHTR) are compositionally biased toward low complexity. Pro residues predominate over residues 554 to 567 (PSRPPSRPSRPPSH). Ser-593 carries the post-translational modification Phosphoserine. A compositionally biased stretch (basic residues) spans 596-606 (AQRHPRNHRVS). Position 609 is an asymmetric dimethylarginine; alternate (Arg-609). Arg-609 is modified (omega-N-methylarginine; alternate). Phosphoserine occurs at positions 611 and 653. Residues 662–672 (PRQSSIGNSPS) show a composition bias toward polar residues. A compositionally biased stretch (low complexity) spans 685-694 (PAEAVSMPVP). Phosphoserine is present on Ser-697. Thr-710 bears the Phosphothreonine mark. The segment covering 737-746 (ASETSPSFSK) has biased composition (polar residues). Phosphoserine occurs at positions 741 and 753. A compositionally biased stretch (basic and acidic residues) spans 757-773 (SEHRKQIDDLKKFKNDF). A compositionally biased stretch (polar residues) spans 776–789 (QPSSTSESMDQLLS). Positions 790-813 (KNREGEKSRDLIKDKTEASAKDSF) are enriched in basic and acidic residues. Positions 814-838 (IDSSSSSSNCTSGSSKTNSPSISPS) are enriched in low complexity. Phosphoserine occurs at positions 827, 828, 832, 836, 838, 859, and 860. The segment covering 851 to 862 (VTSQGVQTSSPA) has biased composition (polar residues). A Glycyl lysine isopeptide (Lys-Gly) (interchain with G-Cter in SUMO2) cross-link involves residue Lys-864. The segment covering 864–881 (KQEKDDREEKKDTTEQVR) has biased composition (basic and acidic residues). Low complexity-rich tracts occupy residues 896–907 (SFSQPKPSTTPT) and 1128–1165 (GQQQSQHGGSHPAPSPVQHHQHQAAQALHLASPQQQSA).

It belongs to the ataxin-2 family. As to quaternary structure, interacts with RBFOX1. Monomer. Can also form homodimers. Interacts with polyribosomes. Interacts with EGFR. Interacts with SH3GL3. Interacts with SH3GL2, SH3KBP1 and CBL. Interacts with ATXN2L. Expressed in the heart, lung, liver, kidney, skeletal muscle, spleen and intestine. Predominant expression was seen in the brain where a high level expression was found in the pyramidal cortical neurons, large brain stem neurons and cerebellar Purkinje cells. All three isoforms were found in all the tissues except skeletal muscle where only isoform 1 was found.

The protein resides in the cytoplasm. Functionally, involved in EGFR trafficking, acting as negative regulator of endocytic EGFR internalization at the plasma membrane. In Mus musculus (Mouse), this protein is Ataxin-2 (Atxn2).